A 444-amino-acid polypeptide reads, in one-letter code: Protein EVI2B (444 aa).

The signal sequence occupies residues 1–23; it reads MEFKYLVFIVLCQYLDNTFFSET. Topologically, residues 24 to 203 are extracellular; that stretch reads EAITTEQQSL…GTAHKNNHNA (180 aa). Asn-63, Asn-94, Asn-104, and Asn-127 each carry an N-linked (GlcNAc...) asparagine glycan. 2 stretches are compositionally biased toward polar residues: residues 104-131 and 160-171; these read NNSL…STGQ and THNQPTKSTPTI. The interval 104-197 is disordered; the sequence is NNSLPQTSPS…EPPSGKGTAH (94 aa). Over residues 177-187 the composition is skewed to pro residues; the sequence is TPPPPPPPLTS. The chain crosses the membrane as a helical span at residues 204–224; sequence IAAILIGTIIISMLVAILMII. Topologically, residues 225–444 are cytoplasmic; sequence LWKYLRKPVL…SLPPPPTELL (220 aa). Residue Thr-250 is modified to Phosphothreonine. Residues Ser-269, Ser-272, Ser-279, and Ser-295 each carry the phosphoserine modification. Composition is skewed to polar residues over residues 318 to 332 and 361 to 370; these read SEDS…TAVS and SPLPNDSINP. Disordered stretches follow at residues 318 to 337 and 361 to 444; these read SEDS…DDAD and SPLP…TELL.

In terms of tissue distribution, expressed in myeloid and lymphoid progenitors and increased in mature hematopoietic populations with the highest levels in granulocytes.

It is found in the membrane. In terms of biological role, required for granulocyte differentiation and functionality of hematopoietic progenitor cells through the control of cell cycle progression and survival of hematopoietic progenitor cells. The protein is Protein EVI2B of Mus musculus (Mouse).